A 337-amino-acid chain; its full sequence is Glucokinase (337 aa).

11–16 (ADIGGT) lines the ATP pocket.

Belongs to the bacterial glucokinase family.

It is found in the cytoplasm. It catalyses the reaction D-glucose + ATP = D-glucose 6-phosphate + ADP + H(+). The sequence is that of Glucokinase from Xylella fastidiosa (strain M12).